Here is a 420-residue protein sequence, read N- to C-terminus: Serine hydroxymethyltransferase (420 aa).

Residues leucine 121 and 125–127 (GHL) contribute to the (6S)-5,6,7,8-tetrahydrofolate site. Lysine 229 carries the post-translational modification N6-(pyridoxal phosphate)lysine. Position 355–357 (355–357 (SPF)) interacts with (6S)-5,6,7,8-tetrahydrofolate.

It belongs to the SHMT family. Homodimer. The cofactor is pyridoxal 5'-phosphate.

It localises to the cytoplasm. It carries out the reaction (6R)-5,10-methylene-5,6,7,8-tetrahydrofolate + glycine + H2O = (6S)-5,6,7,8-tetrahydrofolate + L-serine. It participates in one-carbon metabolism; tetrahydrofolate interconversion. It functions in the pathway amino-acid biosynthesis; glycine biosynthesis; glycine from L-serine: step 1/1. Its function is as follows. Catalyzes the reversible interconversion of serine and glycine with tetrahydrofolate (THF) serving as the one-carbon carrier. This reaction serves as the major source of one-carbon groups required for the biosynthesis of purines, thymidylate, methionine, and other important biomolecules. Also exhibits THF-independent aldolase activity toward beta-hydroxyamino acids, producing glycine and aldehydes, via a retro-aldol mechanism. This is Serine hydroxymethyltransferase from Chromohalobacter salexigens (strain ATCC BAA-138 / DSM 3043 / CIP 106854 / NCIMB 13768 / 1H11).